The chain runs to 375 residues: N5-carboxyaminoimidazole ribonucleotide synthase (375 aa).

ATP is bound by residues arginine 108, lysine 148, 153–159, 183–186, glutamate 191, histidine 214, and 268–269; these read GYDGKGQ, EQYL, and NE. The 187-residue stretch at 112 to 298 folds into the ATP-grasp domain; that stretch reads KQTLQDSGSN…QFDTHIKAIT (187 aa).

It belongs to the PurK/PurT family. Homodimer.

It catalyses the reaction 5-amino-1-(5-phospho-beta-D-ribosyl)imidazole + hydrogencarbonate + ATP = 5-carboxyamino-1-(5-phospho-D-ribosyl)imidazole + ADP + phosphate + 2 H(+). The protein operates within purine metabolism; IMP biosynthesis via de novo pathway; 5-amino-1-(5-phospho-D-ribosyl)imidazole-4-carboxylate from 5-amino-1-(5-phospho-D-ribosyl)imidazole (N5-CAIR route): step 1/2. Functionally, catalyzes the ATP-dependent conversion of 5-aminoimidazole ribonucleotide (AIR) and HCO(3)(-) to N5-carboxyaminoimidazole ribonucleotide (N5-CAIR). The chain is N5-carboxyaminoimidazole ribonucleotide synthase from Staphylococcus saprophyticus subsp. saprophyticus (strain ATCC 15305 / DSM 20229 / NCIMB 8711 / NCTC 7292 / S-41).